The sequence spans 206 residues: Orotate phosphoribosyltransferase (206 aa).

Residues Arg114, Lys115, Lys118, His120, and 141 to 149 (EDVVTTGQS) each bind 5-phospho-alpha-D-ribose 1-diphosphate. Positions 145 and 173 each coordinate orotate.

It belongs to the purine/pyrimidine phosphoribosyltransferase family. PyrE subfamily. As to quaternary structure, homodimer. It depends on Mg(2+) as a cofactor.

The catalysed reaction is orotidine 5'-phosphate + diphosphate = orotate + 5-phospho-alpha-D-ribose 1-diphosphate. The protein operates within pyrimidine metabolism; UMP biosynthesis via de novo pathway; UMP from orotate: step 1/2. Functionally, catalyzes the transfer of a ribosyl phosphate group from 5-phosphoribose 1-diphosphate to orotate, leading to the formation of orotidine monophosphate (OMP). The polypeptide is Orotate phosphoribosyltransferase (Nostoc sp. (strain PCC 7120 / SAG 25.82 / UTEX 2576)).